Reading from the N-terminus, the 343-residue chain is Protein RecA (343 aa).

66–73 provides a ligand contact to ATP; that stretch reads GPESSGKT.

It belongs to the RecA family.

The protein localises to the cytoplasm. In terms of biological role, can catalyze the hydrolysis of ATP in the presence of single-stranded DNA, the ATP-dependent uptake of single-stranded DNA by duplex DNA, and the ATP-dependent hybridization of homologous single-stranded DNAs. It interacts with LexA causing its activation and leading to its autocatalytic cleavage. In Rickettsia bellii (strain OSU 85-389), this protein is Protein RecA.